The primary structure comprises 305 residues: tRNA pseudouridine synthase B (305 aa).

Asp-41 acts as the Nucleophile in catalysis.

This sequence belongs to the pseudouridine synthase TruB family. Type 1 subfamily.

It carries out the reaction uridine(55) in tRNA = pseudouridine(55) in tRNA. In terms of biological role, responsible for synthesis of pseudouridine from uracil-55 in the psi GC loop of transfer RNAs. This chain is tRNA pseudouridine synthase B, found in Prochlorococcus marinus (strain MIT 9515).